We begin with the raw amino-acid sequence, 914 residues long: MALAKEIMGISLLEKSSSFMNSSSMALFNPNNYHKENHLWFNQQFQGRRNLSRRKAFRQSTMAAISENLIKVVPEKAVRFKVRAVVTVRNKNKEDLKETIVKHLDAFTDKIGRNVTLELISTDMDPNTKGPKKSNQAVLKDWSKKSNLKTERVNYTAEFIVDSNFGNPGAITVTNKHQQEFFLESITIEGFACGPVHFPCNSWVQPKKDHPGKRIFFSNQPYLPDETPAGLKSLRERELRDLRGDGKGVRKLSDRIYDYDIYNDLGNPDKGIDFARPKLGGDDNVPYPRRCRSGRVPTDTDISAESRVEKPNPTYVPRDEQFEESKMNTFSTSRLKAVLHNLIPSLMASISSNNHDFKGFSDIDNLYSKGLLLKLGLQDEVLKKLPLPKVVSSIKEGDLLKYDTPKILSKDKFAWLRDDEFARQAIAGVNPVSIEKLQFFPPVSKLDPEIYGPQESALKEEHILGHLNGMTVQEALDANKLFIVDHHDVYLPFLDRINALDGRKAYATRTIFFLSDVGTLKPIAIELSLPQTGPSSRSKRVVTPPVCATGNWTWQIAKAHVCANDAGVHQLVNHWLRTHASLEPFILAAHRQLSAMHPIYKLLDPHMRYTLEINGLARQSLINADGVIEACFTPGRYCMEISAAAYKNWRFDLEGLPADLIRRGMAVPDSTQPHGLKLLIEDYPYAADGLMIWGAIESWVRDYVNHYYPSSAQVCSDRELQAWYAETINVGHVDLRNEEWWPTLATPEDLISILTTLIWLASAQHAALNFGQYPYGGYVPNRPPLMRRLIPDENDPEYAVFLADPQKYFFSALPSLLQATKFMAVVDTLSTHSPDEEYLGERHQPSTWTGDAEIVEAFYKFSAEIGRIEKEIDERNANTKLKNRCGAGVLPYELLAPSSGPGVTCRGVPNSVSI.

The transit peptide at 1–83 directs the protein to the chloroplast; sequence MALAKEIMGI…PEKAVRFKVR (83 aa). The PLAT domain maps to 96–218; sequence LKETIVKHLD…DHPGKRIFFS (123 aa). In terms of domain architecture, Lipoxygenase spans 221–914; sequence PYLPDETPAG…CRGVPNSVSI (694 aa). Fe cation contacts are provided by His-574, His-579, His-765, Asn-769, and Ile-914.

This sequence belongs to the lipoxygenase family. As to quaternary structure, monomer. It depends on Fe cation as a cofactor. As to expression, expressed in roots and leaves. Detected in tubers and flower buds.

It is found in the plastid. The protein resides in the chloroplast stroma. The protein localises to the chloroplast thylakoid. The catalysed reaction is (9Z,12Z)-octadecadienoate + O2 = (13S)-hydroperoxy-(9Z,11E)-octadecadienoate. It catalyses the reaction (9Z,12Z,15Z)-octadecatrienoate + O2 = (13S)-hydroperoxy-(9Z,11E,15Z)-octadecatrienoate. Its pathway is lipid metabolism; oxylipin biosynthesis. Functionally, plant lipoxygenases may be involved in a number of diverse aspects of plant physiology including growth and development, pest resistance, and senescence or responses to wounding. Required for the regulation of wound-induced gene expression, but is not involved in the bulk production of jasmonate upon wounding. Catalyzes the hydroperoxidation of lipids containing a cis,cis-1,4-pentadiene structure. Linolenic acid is the preferred substrate, before linoleic and arachidonic acids. The chain is Linoleate 13S-lipoxygenase 3-1, chloroplastic (LOX3.1) from Solanum tuberosum (Potato).